A 74-amino-acid polypeptide reads, in one-letter code: DNA-directed RNA polymerase subunit omega (74 aa).

It belongs to the RNA polymerase subunit omega family. In terms of assembly, the RNAP catalytic core consists of 2 alpha, 1 beta, 1 beta' and 1 omega subunit. When a sigma factor is associated with the core the holoenzyme is formed, which can initiate transcription.

The catalysed reaction is RNA(n) + a ribonucleoside 5'-triphosphate = RNA(n+1) + diphosphate. Functionally, promotes RNA polymerase assembly. Latches the N- and C-terminal regions of the beta' subunit thereby facilitating its interaction with the beta and alpha subunits. The sequence is that of DNA-directed RNA polymerase subunit omega from Solidesulfovibrio magneticus (strain ATCC 700980 / DSM 13731 / RS-1) (Desulfovibrio magneticus).